The primary structure comprises 272 residues: Ribosomal RNA small subunit methyltransferase A (272 aa).

Residues histidine 10, leucine 12, glycine 37, glutamate 57, aspartate 82, and asparagine 98 each contribute to the S-adenosyl-L-methionine site.

This sequence belongs to the class I-like SAM-binding methyltransferase superfamily. rRNA adenine N(6)-methyltransferase family. RsmA subfamily.

Its subcellular location is the cytoplasm. It catalyses the reaction adenosine(1518)/adenosine(1519) in 16S rRNA + 4 S-adenosyl-L-methionine = N(6)-dimethyladenosine(1518)/N(6)-dimethyladenosine(1519) in 16S rRNA + 4 S-adenosyl-L-homocysteine + 4 H(+). Functionally, specifically dimethylates two adjacent adenosines (A1518 and A1519) in the loop of a conserved hairpin near the 3'-end of 16S rRNA in the 30S particle. May play a critical role in biogenesis of 30S subunits. The protein is Ribosomal RNA small subunit methyltransferase A of Gloeobacter violaceus (strain ATCC 29082 / PCC 7421).